A 422-amino-acid chain; its full sequence is Lactoyl-CoA dehydratase subunit alpha (422 aa).

Belongs to the FldB/FldC dehydratase alpha/beta subunit family. In terms of assembly, heterodimer of an alpha (LcdA) and a beta (LcdB) subunit. Requires [4Fe-4S] cluster as cofactor. FMN serves as cofactor. The cofactor is riboflavin. It depends on Mg(2+) as a cofactor.

It catalyses the reaction (R)-lactoyl-CoA = acryloyl-CoA + H2O. The catalysed reaction is (2R)-hydroxybutanoyl-CoA = (2E)-butenoyl-CoA + H2O. With respect to regulation, activated by the LcdC protein. Its function is as follows. Involved in the acrylate pathway for the conversion of D-lactic acid to propionic acid. Catalyzes the reversible dehydration of Lactoyl-CoA and 2-hydroxybutyroyl-CoA to acryloyl-CoA and crotonyl-CoA, respectively. This chain is Lactoyl-CoA dehydratase subunit alpha (lcdA), found in Anaerotignum propionicum (Clostridium propionicum).